A 190-amino-acid chain; its full sequence is Protein soem-1 (190 aa).

Positions 96–190 (YMEQNMNRVE…LVLKNQLKPV (95 aa)) constitute an SH2 domain.

In terms of assembly, interacts with abl-1. In terms of tissue distribution, expressed in PQR, but not AQR, Q neuroblast descendents.

Functionally, functions downstream of migratory protein mig-13 and may play a role in the control of Q neuroblast migration during larval development. The chain is Protein soem-1 from Caenorhabditis elegans.